Reading from the N-terminus, the 214-residue chain is Pyridoxine/pyridoxamine 5'-phosphate oxidase (214 aa).

Residues 8–11 (RINY) and Lys66 contribute to the substrate site. FMN contacts are provided by residues 61–66 (RIVLVK), 76–77 (FT), Arg82, Lys83, and Gln105. Substrate-binding residues include Tyr123, Arg127, and Ser131. Residues 140-141 (QS) and Trp184 contribute to the FMN site. Substrate is bound at residue 190 to 192 (RLH). Residue Arg194 coordinates FMN.

It belongs to the pyridoxamine 5'-phosphate oxidase family. Homodimer. FMN serves as cofactor.

It catalyses the reaction pyridoxamine 5'-phosphate + O2 + H2O = pyridoxal 5'-phosphate + H2O2 + NH4(+). It carries out the reaction pyridoxine 5'-phosphate + O2 = pyridoxal 5'-phosphate + H2O2. It participates in cofactor metabolism; pyridoxal 5'-phosphate salvage; pyridoxal 5'-phosphate from pyridoxamine 5'-phosphate: step 1/1. The protein operates within cofactor metabolism; pyridoxal 5'-phosphate salvage; pyridoxal 5'-phosphate from pyridoxine 5'-phosphate: step 1/1. Its function is as follows. Catalyzes the oxidation of either pyridoxine 5'-phosphate (PNP) or pyridoxamine 5'-phosphate (PMP) into pyridoxal 5'-phosphate (PLP). The sequence is that of Pyridoxine/pyridoxamine 5'-phosphate oxidase from Burkholderia multivorans (strain ATCC 17616 / 249).